The primary structure comprises 314 residues: Protoheme IX farnesyltransferase (314 aa).

Transmembrane regions (helical) follow at residues 31-51, 52-72, 119-139, 152-172, 179-199, 225-245, 247-267, and 284-304; these read VMSL…GHFH, PVLA…SGAL, ILVN…YVVI, IVIG…AVTG, LLLF…LALF, ILLY…LGYF, AVYG…AINV, and FAFS…EVVF.

This sequence belongs to the UbiA prenyltransferase family. Protoheme IX farnesyltransferase subfamily.

It localises to the cell inner membrane. It catalyses the reaction heme b + (2E,6E)-farnesyl diphosphate + H2O = Fe(II)-heme o + diphosphate. It functions in the pathway porphyrin-containing compound metabolism; heme O biosynthesis; heme O from protoheme: step 1/1. Functionally, converts heme B (protoheme IX) to heme O by substitution of the vinyl group on carbon 2 of heme B porphyrin ring with a hydroxyethyl farnesyl side group. In Bradyrhizobium diazoefficiens (strain JCM 10833 / BCRC 13528 / IAM 13628 / NBRC 14792 / USDA 110), this protein is Protoheme IX farnesyltransferase.